The following is a 144-amino-acid chain: Large ribosomal subunit protein uL15 (144 aa).

Residues 20–49 (GRGIGSGLGKTGGRGHKGQKSRSGGFHKVG) form a disordered region. Residues 21 to 31 (RGIGSGLGKTG) are compositionally biased toward gly residues.

This sequence belongs to the universal ribosomal protein uL15 family. In terms of assembly, part of the 50S ribosomal subunit.

In terms of biological role, binds to the 23S rRNA. The protein is Large ribosomal subunit protein uL15 of Neisseria meningitidis serogroup A / serotype 4A (strain DSM 15465 / Z2491).